The following is a 339-amino-acid chain: Photosystem II assembly lipoprotein Ycf48 (339 aa).

An N-terminal signal peptide occupies residues 1 to 22 (MVIVKSWQKIFALLVVLLLCIG). Cys-23 carries N-palmitoyl cysteine lipidation. Cys-23 carries S-diacylglycerol cysteine lipidation.

The protein belongs to the Ycf48 family. In terms of assembly, part of early PSII assembly complexes which includes D1 (psbA) and PsbI; not found in mature PSII. Binds to the lumenal side of PSII complexes. Interacts with YidC.

The protein localises to the cellular thylakoid membrane. Functionally, a factor required for optimal assembly of photosystem II (PSII), acting in the early stages of PSII assembly. Also plays a role in replacement of photodamaged D1 (psbA). Assists YidC in synthesis of chlorophyll-binding proteins. This Trichormus variabilis (strain ATCC 29413 / PCC 7937) (Anabaena variabilis) protein is Photosystem II assembly lipoprotein Ycf48.